The following is a 367-amino-acid chain: Spermidine/putrescine import ATP-binding protein PotA (367 aa).

In terms of domain architecture, ABC transporter spans 10-240 (IEFKNVSLDY…PINHFVANFI (231 aa)). ATP is bound at residue 42–49 (GPSGSGKS).

The protein belongs to the ABC transporter superfamily. Spermidine/putrescine importer (TC 3.A.1.11.1) family. The complex is composed of two ATP-binding proteins (PotA), two transmembrane proteins (PotB and PotC) and a solute-binding protein (PotD).

It is found in the cell membrane. It catalyses the reaction ATP + H2O + polyamine-[polyamine-binding protein]Side 1 = ADP + phosphate + polyamineSide 2 + [polyamine-binding protein]Side 1.. In terms of biological role, part of the ABC transporter complex PotABCD involved in spermidine/putrescine import. Responsible for energy coupling to the transport system. The sequence is that of Spermidine/putrescine import ATP-binding protein PotA from Oenococcus oeni (strain ATCC BAA-331 / PSU-1).